A 953-amino-acid chain; its full sequence is Valine--tRNA ligase (953 aa).

The 'HIGH' region motif lies at 42–52 (PNVTGSLHMGH). The 'KMSKS' region motif lies at 554–558 (KMSKS). Lys557 contacts ATP. A coiled-coil region spans residues 884 to 953 (LIDKDAELAR…EAQKETIAAL (70 aa)).

This sequence belongs to the class-I aminoacyl-tRNA synthetase family. ValS type 1 subfamily. In terms of assembly, monomer.

The protein localises to the cytoplasm. The catalysed reaction is tRNA(Val) + L-valine + ATP = L-valyl-tRNA(Val) + AMP + diphosphate. In terms of biological role, catalyzes the attachment of valine to tRNA(Val). As ValRS can inadvertently accommodate and process structurally similar amino acids such as threonine, to avoid such errors, it has a 'posttransfer' editing activity that hydrolyzes mischarged Thr-tRNA(Val) in a tRNA-dependent manner. This Photobacterium profundum (strain SS9) protein is Valine--tRNA ligase.